The primary structure comprises 266 residues: 2-hydroxyisocaproyl-CoA dehydratase activator (266 aa).

ATP contacts are provided by residues 10–14 (STASK) and 102–104 (GQD). Residue Cys125 coordinates [4Fe-4S] cluster. Residue Asp134 participates in ATP binding. A [4Fe-4S] cluster-binding site is contributed by Cys164. ATP-binding residues include Gly215 and Gln241.

This sequence belongs to the HadI activator family. As to quaternary structure, homodimer. It depends on [4Fe-4S] cluster as a cofactor.

Involved in the reductive branch of L-leucine fermentation. Required for the activation of (R)-2-hydroxyisocaproyl-CoA dehydratase. The reduced activator transfers one electron to the dehydratase concomitant with hydrolysis of ATP. This protein is extremely sensitive towards oxygen. This Clostridioides difficile (Peptoclostridium difficile) protein is 2-hydroxyisocaproyl-CoA dehydratase activator.